The sequence spans 140 residues: Small ribosomal subunit protein uS12 (140 aa).

Asp-102 carries the 3-methylthioaspartic acid modification.

Belongs to the universal ribosomal protein uS12 family. As to quaternary structure, part of the 30S ribosomal subunit. Contacts proteins S8 and S17. May interact with IF1 in the 30S initiation complex.

In terms of biological role, with S4 and S5 plays an important role in translational accuracy. Its function is as follows. Interacts with and stabilizes bases of the 16S rRNA that are involved in tRNA selection in the A site and with the mRNA backbone. Located at the interface of the 30S and 50S subunits, it traverses the body of the 30S subunit contacting proteins on the other side and probably holding the rRNA structure together. The combined cluster of proteins S8, S12 and S17 appears to hold together the shoulder and platform of the 30S subunit. This chain is Small ribosomal subunit protein uS12, found in Bacillus anthracis (strain A0248).